We begin with the raw amino-acid sequence, 1288 residues long: 5-oxoprolinase (1288 aa).

Residue Thr-151 is modified to Phosphothreonine. The tract at residues 1248-1272 (PGGGGYGDPEDPAPPPGSPPQALAF) is disordered. Residue Ser-1265 is modified to Phosphoserine.

Belongs to the oxoprolinase family. In terms of assembly, homodimer.

It is found in the cytoplasm. It localises to the cytosol. It catalyses the reaction 5-oxo-L-proline + ATP + 2 H2O = L-glutamate + ADP + phosphate + H(+). Its function is as follows. Catalyzes the cleavage of 5-oxo-L-proline to form L-glutamate coupled to the hydrolysis of ATP to ADP and inorganic phosphate. The chain is 5-oxoprolinase from Homo sapiens (Human).